A 404-amino-acid polypeptide reads, in one-letter code: Cysteine desulfurase IscS (404 aa).

Pyridoxal 5'-phosphate-binding positions include 75–76, asparagine 155, glutamine 183, and 203–205; these read AT and SAH. Lysine 206 bears the N6-(pyridoxal phosphate)lysine mark. Position 243 (threonine 243) interacts with pyridoxal 5'-phosphate. Residue cysteine 328 is the Cysteine persulfide intermediate of the active site. Cysteine 328 provides a ligand contact to [2Fe-2S] cluster.

The protein belongs to the class-V pyridoxal-phosphate-dependent aminotransferase family. NifS/IscS subfamily. In terms of assembly, homodimer. Forms a heterotetramer with IscU, interacts with other sulfur acceptors. It depends on pyridoxal 5'-phosphate as a cofactor.

It localises to the cytoplasm. It catalyses the reaction (sulfur carrier)-H + L-cysteine = (sulfur carrier)-SH + L-alanine. It participates in cofactor biosynthesis; iron-sulfur cluster biosynthesis. Functionally, master enzyme that delivers sulfur to a number of partners involved in Fe-S cluster assembly, tRNA modification or cofactor biosynthesis. Catalyzes the removal of elemental sulfur atoms from cysteine to produce alanine. Functions as a sulfur delivery protein for Fe-S cluster synthesis onto IscU, an Fe-S scaffold assembly protein, as well as other S acceptor proteins. This is Cysteine desulfurase IscS from Tolumonas auensis (strain DSM 9187 / NBRC 110442 / TA 4).